Here is a 147-residue protein sequence, read N- to C-terminus: Deoxyuridine 5'-triphosphate nucleotidohydrolase (147 aa).

Arg-24 lines the Mg(2+) pocket. Residues 68–70 (PRS), 82–85 (GVID), Tyr-88, Gly-93, Ile-95, and Arg-111 each bind dUTP.

The protein belongs to the dUTPase family. Requires Mg(2+) as cofactor.

The enzyme catalyses dUTP + H2O = dUMP + diphosphate + H(+). Its function is as follows. This enzyme is involved in nucleotide metabolism: it produces dUMP, the immediate precursor of thymidine nucleotides and it decreases the intracellular concentration of dUTP so that uracil cannot be incorporated into DNA. This is Deoxyuridine 5'-triphosphate nucleotidohydrolase (OPG046) from Bos taurus (Bovine).